A 175-amino-acid polypeptide reads, in one-letter code: Inosine/xanthosine triphosphatase (175 aa).

Thr-8–Lys-13 is a binding site for substrate. Mg(2+)-binding residues include Asp-38 and Glu-68. Glu-68–Ala-69 is a substrate binding site.

The protein belongs to the YjjX NTPase family. Homodimer. Mg(2+) is required as a cofactor. Mn(2+) serves as cofactor.

It catalyses the reaction XTP + H2O = XDP + phosphate + H(+). It carries out the reaction ITP + H2O = IDP + phosphate + H(+). Functionally, phosphatase that hydrolyzes non-canonical purine nucleotides such as XTP and ITP to their respective diphosphate derivatives. Probably excludes non-canonical purines from DNA/RNA precursor pool, thus preventing their incorporation into DNA/RNA and avoiding chromosomal lesions. This chain is Inosine/xanthosine triphosphatase, found in Yersinia enterocolitica serotype O:8 / biotype 1B (strain NCTC 13174 / 8081).